Reading from the N-terminus, the 103-residue chain is Large ribosomal subunit protein bL21 (103 aa).

It belongs to the bacterial ribosomal protein bL21 family. As to quaternary structure, part of the 50S ribosomal subunit. Contacts protein L20.

In terms of biological role, this protein binds to 23S rRNA in the presence of protein L20. This Lactobacillus johnsonii (strain CNCM I-12250 / La1 / NCC 533) protein is Large ribosomal subunit protein bL21.